A 106-amino-acid polypeptide reads, in one-letter code: YcgL domain-containing protein PsycPRwf_1721 (106 aa).

Residues 1-94 (MHCDIYKFPK…PSDVLLAQAQ (94 aa)) form the YcgL domain.

The polypeptide is YcgL domain-containing protein PsycPRwf_1721 (Psychrobacter sp. (strain PRwf-1)).